The sequence spans 484 residues: Notoamide biosynthesis transcriptional activator notL (484 aa).

Residues 33–60 (CQSCATSKIKCPKEKTSCSKCQARGIEC) constitute a DNA-binding region (zn(2)-C6 fungal-type). 2 disordered regions span residues 70–154 (RRRE…NNSV) and 363–387 (GGGE…QMRP). The span at 76–122 (TGHPTSCTSTSTTANSSSSSSRSSNSSSSSSTSPPSSSSSLSSNPEP) shows a compositional bias: low complexity. The segment covering 123-133 (TSDKDLPRPRS) has biased composition (basic and acidic residues). Polar residues-rich tracts occupy residues 139–154 (ANST…NNSV) and 368–378 (DTGQRPATSMI).

It localises to the nucleus. Its function is as follows. Transcription factor that probably regulates the expression of the gene cluster that mediates the biosynthesis of notoamide, a fungal indole alkaloid that belongs to a family of natural products containing a characteristic bicyclo[2.2.2]diazaoctane core. The protein is Notoamide biosynthesis transcriptional activator notL of Aspergillus sp. (strain MF297-2).